Consider the following 121-residue polypeptide: Large ribosomal subunit protein bL12 (121 aa).

This sequence belongs to the bacterial ribosomal protein bL12 family. In terms of assembly, homodimer. Part of the ribosomal stalk of the 50S ribosomal subunit. Forms a multimeric L10(L12)X complex, where L10 forms an elongated spine to which 2 to 4 L12 dimers bind in a sequential fashion. Binds GTP-bound translation factors.

Functionally, forms part of the ribosomal stalk which helps the ribosome interact with GTP-bound translation factors. Is thus essential for accurate translation. The sequence is that of Large ribosomal subunit protein bL12 from Mesomycoplasma hyopneumoniae (strain 232) (Mycoplasma hyopneumoniae).